The primary structure comprises 179 residues: Large ribosomal subunit protein uL6 (179 aa).

The protein belongs to the universal ribosomal protein uL6 family. As to quaternary structure, part of the 50S ribosomal subunit.

This protein binds to the 23S rRNA, and is important in its secondary structure. It is located near the subunit interface in the base of the L7/L12 stalk, and near the tRNA binding site of the peptidyltransferase center. This is Large ribosomal subunit protein uL6 from Fructilactobacillus sanfranciscensis (Lactobacillus sanfranciscensis).